A 145-amino-acid polypeptide reads, in one-letter code: Deoxyuridine 5'-triphosphate nucleotidohydrolase (145 aa).

Residues 64–66, asparagine 77, 81–83, and methionine 91 contribute to the substrate site; these read RSG and TID.

Belongs to the dUTPase family. Mg(2+) is required as a cofactor.

The catalysed reaction is dUTP + H2O = dUMP + diphosphate + H(+). Its pathway is pyrimidine metabolism; dUMP biosynthesis; dUMP from dCTP (dUTP route): step 2/2. Its function is as follows. This enzyme is involved in nucleotide metabolism: it produces dUMP, the immediate precursor of thymidine nucleotides and it decreases the intracellular concentration of dUTP so that uracil cannot be incorporated into DNA. This chain is Deoxyuridine 5'-triphosphate nucleotidohydrolase, found in Leptospira borgpetersenii serovar Hardjo-bovis (strain JB197).